The following is a 400-amino-acid chain: Argininosuccinate synthase (400 aa).

8–16 (AYSGGLDTS) lines the ATP pocket. Positions 87 and 92 each coordinate L-citrulline. Gly117 contributes to the ATP binding site. L-aspartate is bound by residues Thr119, Asn123, and Asp124. Residue Asn123 participates in L-citrulline binding. Residues Arg127, Ser175, Glu259, and Tyr271 each contribute to the L-citrulline site.

It belongs to the argininosuccinate synthase family. Type 1 subfamily. As to quaternary structure, homotetramer.

It localises to the cytoplasm. The enzyme catalyses L-citrulline + L-aspartate + ATP = 2-(N(omega)-L-arginino)succinate + AMP + diphosphate + H(+). It functions in the pathway amino-acid biosynthesis; L-arginine biosynthesis; L-arginine from L-ornithine and carbamoyl phosphate: step 2/3. The polypeptide is Argininosuccinate synthase (Frankia casuarinae (strain DSM 45818 / CECT 9043 / HFP020203 / CcI3)).